Here is a 474-residue protein sequence, read N- to C-terminus: ATP synthase subunit beta 2 (474 aa).

156 to 163 (GGAGVGKT) is an ATP binding site.

It belongs to the ATPase alpha/beta chains family. In terms of assembly, F-type ATPases have 2 components, CF(1) - the catalytic core - and CF(0) - the membrane proton channel. CF(1) has five subunits: alpha(3), beta(3), gamma(1), delta(1), epsilon(1). CF(0) has three main subunits: a(1), b(2) and c(9-12). The alpha and beta chains form an alternating ring which encloses part of the gamma chain. CF(1) is attached to CF(0) by a central stalk formed by the gamma and epsilon chains, while a peripheral stalk is formed by the delta and b chains.

The protein localises to the cell inner membrane. It carries out the reaction ATP + H2O + 4 H(+)(in) = ADP + phosphate + 5 H(+)(out). Produces ATP from ADP in the presence of a proton gradient across the membrane. The catalytic sites are hosted primarily by the beta subunits. This is ATP synthase subunit beta 2 from Shewanella frigidimarina (strain NCIMB 400).